The chain runs to 71 residues: Putative defensin-like protein 303 (71 aa).

An N-terminal signal peptide occupies residues 1 to 25; that stretch reads MKSNKATFFLGLLLVYAFCIMLIES. 3 cysteine pairs are disulfide-bonded: Cys-27-Cys-45, Cys-33-Cys-50, and Cys-39-Cys-52.

The protein belongs to the DEFL family.

Its subcellular location is the secreted. This is Putative defensin-like protein 303 from Arabidopsis thaliana (Mouse-ear cress).